The primary structure comprises 155 residues: Protein SprT-like (155 aa).

Positions 6–148 constitute a SprT-like domain; it reads LQRLVERVSL…VCGQCGGKLM (143 aa). Position 67 (H67) interacts with Zn(2+). E68 is an active-site residue. H71 is a Zn(2+) binding site.

This sequence belongs to the SprT family. It depends on Zn(2+) as a cofactor.

The protein resides in the cytoplasm. The chain is Protein SprT-like from Geobacillus sp. (strain WCH70).